The chain runs to 485 residues: Adenosylhomocysteinase (485 aa).

Positions 64, 139, and 205 each coordinate substrate. 206–208 (TTT) provides a ligand contact to NAD(+). Residues Lys-235 and Asp-239 each contribute to the substrate site. NAD(+)-binding positions include Asn-240, 269-274 (GYGDVG), Glu-292, Asn-327, 348-350 (IGH), and Asn-397.

Belongs to the adenosylhomocysteinase family. Requires NAD(+) as cofactor.

It carries out the reaction S-adenosyl-L-homocysteine + H2O = L-homocysteine + adenosine. It functions in the pathway amino-acid biosynthesis; L-homocysteine biosynthesis; L-homocysteine from S-adenosyl-L-homocysteine: step 1/1. Functionally, adenosylhomocysteine is a competitive inhibitor of S-adenosyl-L-methionine-dependent methyl transferase reactions; therefore adenosylhomocysteinase may play a key role in the control of methylations via regulation of the intracellular concentration of adenosylhomocysteine. This is Adenosylhomocysteinase (SAHH) from Phalaenopsis sp. (Moth orchid).